A 359-amino-acid polypeptide reads, in one-letter code: Guanine nucleotide-binding protein subunit alpha-11 (359 aa).

Residues Cys-9 and Cys-10 are each lipidated (S-palmitoyl cysteine). The G-alpha domain occupies 38–359 (RELKLLLLGT…QLNLKEYNLV (322 aa)). The segment at 41–54 (KLLLLGTGESGKST) is G1 motif. GTP-binding positions include 46-53 (GTGESGKS) and 180-183 (LRVR). Ser-53 serves as a coordination point for Mg(2+). Residues 178–186 (DVLRVRVPT) form a G2 motif region. Mg(2+) is bound at residue Thr-186. A G3 motif region spans residues 201–210 (FRMVDVGGQR). Residues 270–277 (ILFLNKKD) form a G4 motif region. Residues 274-277 (NKKD) and Ala-331 contribute to the GTP site. Residues 329 to 334 (TCATDT) form a G5 motif region.

Belongs to the G-alpha family. G(q) subfamily. As to quaternary structure, g proteins are composed of 3 units; alpha, beta and gamma. The alpha chain contains the guanine nucleotide binding site. Interacts with RGS22. Interacts with NTSR1.

It is found in the cell membrane. The protein resides in the cytoplasm. The enzyme catalyses GTP + H2O = GDP + phosphate + H(+). Guanine nucleotide-binding proteins (G proteins) function as transducers downstream of G protein-coupled receptors (GPCRs) in numerous signaling cascades. The alpha chain contains the guanine nucleotide binding site and alternates between an active, GTP-bound state and an inactive, GDP-bound state. Signaling by an activated GPCR promotes GDP release and GTP binding. The alpha subunit has a low GTPase activity that converts bound GTP to GDP, thereby terminating the signal. Both GDP release and GTP hydrolysis are modulated by numerous regulatory proteins. Signaling is mediated via phospholipase C-beta-dependent inositol lipid hydrolysis for signal propagation: activates phospholipase C-beta: following GPCR activation, GNA11 activates PLC-beta (PLCB1, PLCB2, PLCB3 or PLCB4), leading to production of diacylglycerol (DAG) and inositol 1,4,5-trisphosphate (IP3). Transduces FFAR4 signaling in response to long-chain fatty acids (LCFAs). Together with GNAQ, required for heart development. In the respiratory epithelium, transmits OXGR1-dependent signals that lead to downstream intracellular Ca(2+) release and mucocilliary clearance of airborne pathogens. The sequence is that of Guanine nucleotide-binding protein subunit alpha-11 (Gna11) from Mus musculus (Mouse).